A 543-amino-acid chain; its full sequence is Glucose-6-phosphate isomerase (543 aa).

Catalysis depends on E353, which acts as the Proton donor. Active-site residues include H384 and K504.

The protein belongs to the GPI family.

The protein localises to the cytoplasm. It catalyses the reaction alpha-D-glucose 6-phosphate = beta-D-fructose 6-phosphate. The protein operates within carbohydrate biosynthesis; gluconeogenesis. It functions in the pathway carbohydrate degradation; glycolysis; D-glyceraldehyde 3-phosphate and glycerone phosphate from D-glucose: step 2/4. Catalyzes the reversible isomerization of glucose-6-phosphate to fructose-6-phosphate. The sequence is that of Glucose-6-phosphate isomerase from Roseiflexus sp. (strain RS-1).